The primary structure comprises 667 residues: Phosphomethylpyrimidine synthase (667 aa).

Substrate is bound by residues Asn235, Met264, Tyr293, His329, 349-351 (SRG), 390-393 (DGMR), and Glu429. His433 lines the Zn(2+) pocket. Tyr456 provides a ligand contact to substrate. His497 serves as a coordination point for Zn(2+). [4Fe-4S] cluster-binding residues include Cys577, Cys580, and Cys585. Positions 618–642 (DSYTGSESDTAKRASQREQGMAQMS) are disordered.

Belongs to the ThiC family. Homodimer. It depends on [4Fe-4S] cluster as a cofactor.

It carries out the reaction 5-amino-1-(5-phospho-beta-D-ribosyl)imidazole + S-adenosyl-L-methionine = 4-amino-2-methyl-5-(phosphooxymethyl)pyrimidine + CO + 5'-deoxyadenosine + formate + L-methionine + 3 H(+). It functions in the pathway cofactor biosynthesis; thiamine diphosphate biosynthesis. Functionally, catalyzes the synthesis of the hydroxymethylpyrimidine phosphate (HMP-P) moiety of thiamine from aminoimidazole ribotide (AIR) in a radical S-adenosyl-L-methionine (SAM)-dependent reaction. The protein is Phosphomethylpyrimidine synthase of Shewanella pealeana (strain ATCC 700345 / ANG-SQ1).